The sequence spans 240 residues: 1-(5-phosphoribosyl)-5-[(5-phosphoribosylamino)methylideneamino] imidazole-4-carboxamide isomerase (240 aa).

The Proton acceptor role is filled by D10. D131 acts as the Proton donor in catalysis.

This sequence belongs to the HisA/HisF family.

It is found in the cytoplasm. It catalyses the reaction 1-(5-phospho-beta-D-ribosyl)-5-[(5-phospho-beta-D-ribosylamino)methylideneamino]imidazole-4-carboxamide = 5-[(5-phospho-1-deoxy-D-ribulos-1-ylimino)methylamino]-1-(5-phospho-beta-D-ribosyl)imidazole-4-carboxamide. The protein operates within amino-acid biosynthesis; L-histidine biosynthesis; L-histidine from 5-phospho-alpha-D-ribose 1-diphosphate: step 4/9. The protein is 1-(5-phosphoribosyl)-5-[(5-phosphoribosylamino)methylideneamino] imidazole-4-carboxamide isomerase of Shouchella clausii (strain KSM-K16) (Alkalihalobacillus clausii).